We begin with the raw amino-acid sequence, 288 residues long: Galactose/N-acetyl-D-galactosamine lectin light subunit 1 (288 aa).

An N-terminal signal peptide occupies residues 1–15 (MIILVLLISYSFGKT). N-linked (GlcNAc...) asparagine glycosylation is found at asparagine 205 and asparagine 261.

In terms of assembly, heterodimer composed of a 170 kDa heavy subunit (hgl) and a 31/35 kDa light subunit (lgl); disulfide-linked.

It is found in the cell membrane. In terms of biological role, light subunit of a heterodimeric lectin; the heavy subunit binds galactose and N-acetyl-D-galactosamine of host glycoproteins and thus mediates adhesion to host cells. This Entamoeba histolytica (strain ATCC 30459 / HM-1:IMSS / ABRM) protein is Galactose/N-acetyl-D-galactosamine lectin light subunit 1.